The following is a 426-amino-acid chain: Isovaleryl-CoA dehydrogenase, mitochondrial (426 aa).

The N-terminal 32 residues, M1–T32, are a transit peptide targeting the mitochondrion. Residues K58 and K78 each carry the N6-acetyllysine; alternate modification. An N6-succinyllysine; alternate mark is found at K58 and K78. FAD contacts are provided by residues L165–S174 and W198–T200. S174 contributes to the substrate binding site. S222–R223 serves as a coordination point for substrate. K241 is modified (N6-acetyllysine). Substrate-binding positions include Y277 and D284–R287. E286 functions as the Proton acceptor in the catalytic mechanism. Residue R312 coordinates FAD. At K318 the chain carries N6-succinyllysine. Residues Q323 and Q380–G384 contribute to the FAD site. Substrate is bound at residue A407–G408. T409–E411 contributes to the FAD binding site.

Belongs to the acyl-CoA dehydrogenase family. In terms of assembly, homotetramer. FAD serves as cofactor.

The protein localises to the mitochondrion matrix. The catalysed reaction is 3-methylbutanoyl-CoA + oxidized [electron-transfer flavoprotein] + H(+) = 3-methylbut-2-enoyl-CoA + reduced [electron-transfer flavoprotein]. It carries out the reaction pentanoyl-CoA + oxidized [electron-transfer flavoprotein] + H(+) = (2E)-pentenoyl-CoA + reduced [electron-transfer flavoprotein]. It catalyses the reaction hexanoyl-CoA + oxidized [electron-transfer flavoprotein] + H(+) = (2E)-hexenoyl-CoA + reduced [electron-transfer flavoprotein]. The enzyme catalyses butanoyl-CoA + oxidized [electron-transfer flavoprotein] + H(+) = (2E)-butenoyl-CoA + reduced [electron-transfer flavoprotein]. It functions in the pathway amino-acid degradation; L-leucine degradation; (S)-3-hydroxy-3-methylglutaryl-CoA from 3-isovaleryl-CoA: step 1/3. Its function is as follows. Catalyzes the conversion of isovaleryl-CoA/3-methylbutanoyl-CoA to 3-methylbut-2-enoyl-CoA as an intermediate step in the leucine (Leu) catabolic pathway. To a lesser extent, is also able to catalyze the oxidation of other saturated short-chain acyl-CoA thioesters as pentanoyl-CoA, hexenoyl-CoA and butenoyl-CoA. The protein is Isovaleryl-CoA dehydrogenase, mitochondrial (IVD) of Bos taurus (Bovine).